Reading from the N-terminus, the 292-residue chain is CCR4-NOT transcription complex subunit 8 (292 aa).

4 residues coordinate a divalent metal cation: aspartate 40, glutamate 42, aspartate 161, and aspartate 230.

Belongs to the CAF1 family. Component of the CCR4-NOT complex; distinct complexes seem to exist that differ in the participation of probably mutually exclusive catalytic subunits; the complex contains two deadenylase subunits, CNOT6 or CNOT6L, and CNOT7 or CNOT8. In the complex interacts directly with CNOT1. Interacts with BTG1, BTG2 and TOB1. Interacts with BTG4.

The protein localises to the cytoplasm. It is found in the nucleus. The enzyme catalyses Exonucleolytic cleavage of poly(A) to 5'-AMP.. Its function is as follows. Has 3'-5' poly(A) exoribonuclease activity for synthetic poly(A) RNA substrate. Its function seems to be partially redundant with that of CNOT7. Catalytic component of the CCR4-NOT complex which is linked to various cellular processes including bulk mRNA degradation, miRNA-mediated repression, translational repression during translational initiation and general transcription regulation. During miRNA-mediated repression the complex also seems to act as translational repressor during translational initiation. Additional complex functions may be a consequence of its influence on mRNA expression. Associates with members of the BTG family such as TOB1 and BTG2 and is required for their anti-proliferative activity. This chain is CCR4-NOT transcription complex subunit 8 (CNOT8), found in Homo sapiens (Human).